The chain runs to 291 residues: GTPase Era (291 aa).

Positions 2-167 (KSGFVSIIGR…LDEIVKYLDE (166 aa)) constitute an Era-type G domain. Residues 10–17 (GRTNAGKS) are G1. Residue 10 to 17 (GRTNAGKS) participates in GTP binding. The tract at residues 36–40 (NATRR) is G2. The segment at 57–60 (DTPG) is G3. GTP contacts are provided by residues 57–61 (DTPGL) and 116–119 (NKVD). The tract at residues 116 to 119 (NKVD) is G4. Positions 146-148 (YSS) are G5. Positions 186 to 274 (YRDFILESIY…LLKLFVTVKK (89 aa)) constitute a KH type-2 domain.

Belongs to the TRAFAC class TrmE-Era-EngA-EngB-Septin-like GTPase superfamily. Era GTPase family. Monomer.

The protein localises to the cytoplasm. It is found in the cell inner membrane. In terms of biological role, an essential GTPase that binds both GDP and GTP, with rapid nucleotide exchange. Plays a role in 16S rRNA processing and 30S ribosomal subunit biogenesis and possibly also in cell cycle regulation and energy metabolism. This Campylobacter jejuni (strain RM1221) protein is GTPase Era.